The following is a 511-amino-acid chain: Colicin-B (511 aa).

Residues 17-24 (DTMVVWPS) carry the TonB box motif. The next 2 helical transmembrane spans lie at 455 to 475 (MASAVALSLFSLTLGSALIAF) and 477 to 497 (LSATVVGFVGVVIAGAIGAFI).

This sequence belongs to the channel forming colicin family.

Its subcellular location is the cell membrane. In terms of biological role, this colicin is a channel-forming colicin. This class of transmembrane toxins depolarize the cytoplasmic membrane, leading to dissipation of cellular energy. Colicins are polypeptide toxins produced by and active against E.coli and closely related bacteria. This Escherichia coli protein is Colicin-B (cba).